A 358-amino-acid chain; its full sequence is 3-isopropylmalate dehydrogenase 2 (358 aa).

Residue 74-87 (GPKWDKLPAESRPE) coordinates NAD(+). 4 residues coordinate substrate: arginine 94, arginine 104, arginine 132, and aspartate 221. Mg(2+) is bound by residues aspartate 221, aspartate 245, and aspartate 249. 279 to 291 (GSAPDIAGQGVAN) provides a ligand contact to NAD(+).

This sequence belongs to the isocitrate and isopropylmalate dehydrogenases family. LeuB type 1 subfamily. As to quaternary structure, homodimer. Mg(2+) serves as cofactor. Mn(2+) is required as a cofactor.

The protein localises to the cytoplasm. The enzyme catalyses (2R,3S)-3-isopropylmalate + NAD(+) = 4-methyl-2-oxopentanoate + CO2 + NADH. Its pathway is amino-acid biosynthesis; L-leucine biosynthesis; L-leucine from 3-methyl-2-oxobutanoate: step 3/4. In terms of biological role, catalyzes the oxidation of 3-carboxy-2-hydroxy-4-methylpentanoate (3-isopropylmalate) to 3-carboxy-4-methyl-2-oxopentanoate. The product decarboxylates to 4-methyl-2 oxopentanoate. This is 3-isopropylmalate dehydrogenase 2 from Dechloromonas aromatica (strain RCB).